We begin with the raw amino-acid sequence, 275 residues long: Putative carbamate hydrolase RutD (275 aa).

The AB hydrolase-1 domain maps to 15–116 (TVVLSSGLGG…SLVVINGWTV (102 aa)).

Belongs to the AB hydrolase superfamily. Hydrolase RutD family.

It catalyses the reaction carbamate + 2 H(+) = NH4(+) + CO2. Its function is as follows. Involved in pyrimidine catabolism. May facilitate the hydrolysis of carbamate, a reaction that can also occur spontaneously. The sequence is that of Putative carbamate hydrolase RutD from Pantoea ananatis (strain LMG 20103).